The primary structure comprises 292 residues: 4-hydroxy-tetrahydrodipicolinate synthase (292 aa).

T45 provides a ligand contact to pyruvate. The active-site Proton donor/acceptor is Y133. The Schiff-base intermediate with substrate role is filled by K161. I203 contacts pyruvate.

This sequence belongs to the DapA family. In terms of assembly, homotetramer; dimer of dimers.

Its subcellular location is the cytoplasm. The catalysed reaction is L-aspartate 4-semialdehyde + pyruvate = (2S,4S)-4-hydroxy-2,3,4,5-tetrahydrodipicolinate + H2O + H(+). It functions in the pathway amino-acid biosynthesis; L-lysine biosynthesis via DAP pathway; (S)-tetrahydrodipicolinate from L-aspartate: step 3/4. Functionally, catalyzes the condensation of (S)-aspartate-beta-semialdehyde [(S)-ASA] and pyruvate to 4-hydroxy-tetrahydrodipicolinate (HTPA). This chain is 4-hydroxy-tetrahydrodipicolinate synthase, found in Vibrio cholerae serotype O1 (strain ATCC 39541 / Classical Ogawa 395 / O395).